Here is a 100-residue protein sequence, read N- to C-terminus: Integration host factor subunit alpha (100 aa).

Belongs to the bacterial histone-like protein family. In terms of assembly, heterodimer of an alpha and a beta chain.

This protein is one of the two subunits of integration host factor, a specific DNA-binding protein that functions in genetic recombination as well as in transcriptional and translational control. This Caulobacter sp. (strain K31) protein is Integration host factor subunit alpha.